The primary structure comprises 156 residues: Transcriptional repressor NrdR (156 aa).

A zinc finger lies at 3–34 (CPYCGHLDNKVIDSRINKDATITRRRRSCLAC). In terms of domain architecture, ATP-cone spans 49–139 (PMLVKKDGRR…VYRQFKDVDE (91 aa)).

It belongs to the NrdR family. Zn(2+) serves as cofactor.

Its function is as follows. Negatively regulates transcription of bacterial ribonucleotide reductase nrd genes and operons by binding to NrdR-boxes. This is Transcriptional repressor NrdR from Desulfotalea psychrophila (strain LSv54 / DSM 12343).